The chain runs to 668 residues: NADH-ubiquinone oxidoreductase chain 5 (668 aa).

18 helical membrane-spanning segments follow: residues 1–21 (MYII…LFGH), 31–51 (IAVG…YEIL), 81–101 (LTSI…LYSM), 111–131 (TRFF…VTAD), 133–153 (FVQL…LINF), 178–198 (LFFG…SVIF), 211–231 (LLGY…IGVV), 251–271 (TPVS…FLVL), 283–303 (ILNI…TIGI), 311–331 (VIAY…GLLN), 339–359 (LTTH…VIHG), 375–395 (LMPL…GFPF), 421–441 (AIIG…LLIL), 462–482 (TNMV…GYLT), 519–539 (LLPL…YFNL), 566–586 (FDFL…YDVM), 629–649 (IVQA…IGFL), and 650–668 (YVEL…PKIK).

It belongs to the complex I subunit 5 family.

Its subcellular location is the mitochondrion inner membrane. The enzyme catalyses a ubiquinone + NADH + 5 H(+)(in) = a ubiquinol + NAD(+) + 4 H(+)(out). Functionally, core subunit of the mitochondrial membrane respiratory chain NADH dehydrogenase (Complex I) that is believed to belong to the minimal assembly required for catalysis. Complex I functions in the transfer of electrons from NADH to the respiratory chain. The immediate electron acceptor for the enzyme is believed to be ubiquinone. This chain is NADH-ubiquinone oxidoreductase chain 5 (nad5), found in Dictyostelium citrinum (Slime mold).